A 123-amino-acid chain; its full sequence is NADH-quinone oxidoreductase subunit A (123 aa).

3 consecutive transmembrane segments (helical) span residues 11-31 (YLPI…IMIL), 68-88 (LVAI…PWAI), and 93-113 (IGKI…IGFI).

This sequence belongs to the complex I subunit 3 family. In terms of assembly, NDH-1 is composed of 14 different subunits. Subunits NuoA, H, J, K, L, M, N constitute the membrane sector of the complex.

The protein localises to the cell inner membrane. It carries out the reaction a quinone + NADH + 5 H(+)(in) = a quinol + NAD(+) + 4 H(+)(out). In terms of biological role, NDH-1 shuttles electrons from NADH, via FMN and iron-sulfur (Fe-S) centers, to quinones in the respiratory chain. The immediate electron acceptor for the enzyme in this species is believed to be ubiquinone. Couples the redox reaction to proton translocation (for every two electrons transferred, four hydrogen ions are translocated across the cytoplasmic membrane), and thus conserves the redox energy in a proton gradient. In Rickettsia felis (strain ATCC VR-1525 / URRWXCal2) (Rickettsia azadi), this protein is NADH-quinone oxidoreductase subunit A.